A 315-amino-acid polypeptide reads, in one-letter code: 4-hydroxy-3-methylbut-2-enyl diphosphate reductase (315 aa).

Cys12 serves as a coordination point for [4Fe-4S] cluster. 2 residues coordinate (2E)-4-hydroxy-3-methylbut-2-enyl diphosphate: His41 and His74. Residues His41 and His74 each coordinate dimethylallyl diphosphate. Residues His41 and His74 each coordinate isopentenyl diphosphate. Cys96 contacts [4Fe-4S] cluster. His124 is a binding site for (2E)-4-hydroxy-3-methylbut-2-enyl diphosphate. His124 lines the dimethylallyl diphosphate pocket. His124 contacts isopentenyl diphosphate. Glu126 serves as the catalytic Proton donor. Thr168 is a binding site for (2E)-4-hydroxy-3-methylbut-2-enyl diphosphate. [4Fe-4S] cluster is bound at residue Cys198. 4 residues coordinate (2E)-4-hydroxy-3-methylbut-2-enyl diphosphate: Ser226, Ser227, Asn228, and Ser270. Dimethylallyl diphosphate is bound by residues Ser226, Ser227, Asn228, and Ser270. Isopentenyl diphosphate contacts are provided by Ser226, Ser227, Asn228, and Ser270.

This sequence belongs to the IspH family. [4Fe-4S] cluster serves as cofactor.

The enzyme catalyses isopentenyl diphosphate + 2 oxidized [2Fe-2S]-[ferredoxin] + H2O = (2E)-4-hydroxy-3-methylbut-2-enyl diphosphate + 2 reduced [2Fe-2S]-[ferredoxin] + 2 H(+). The catalysed reaction is dimethylallyl diphosphate + 2 oxidized [2Fe-2S]-[ferredoxin] + H2O = (2E)-4-hydroxy-3-methylbut-2-enyl diphosphate + 2 reduced [2Fe-2S]-[ferredoxin] + 2 H(+). It functions in the pathway isoprenoid biosynthesis; dimethylallyl diphosphate biosynthesis; dimethylallyl diphosphate from (2E)-4-hydroxy-3-methylbutenyl diphosphate: step 1/1. Its pathway is isoprenoid biosynthesis; isopentenyl diphosphate biosynthesis via DXP pathway; isopentenyl diphosphate from 1-deoxy-D-xylulose 5-phosphate: step 6/6. In terms of biological role, catalyzes the conversion of 1-hydroxy-2-methyl-2-(E)-butenyl 4-diphosphate (HMBPP) into a mixture of isopentenyl diphosphate (IPP) and dimethylallyl diphosphate (DMAPP). Acts in the terminal step of the DOXP/MEP pathway for isoprenoid precursor biosynthesis. This Pseudomonas putida (strain W619) protein is 4-hydroxy-3-methylbut-2-enyl diphosphate reductase.